Here is an 846-residue protein sequence, read N- to C-terminus: Patched domain-containing protein 4 (846 aa).

The next 10 helical transmembrane spans lie at 41-61 (HPVF…LSAL), 230-250 (SILA…TATL), 265-285 (GLLG…IFFI), 293-313 (TLLG…FELL), 336-356 (VMVT…MGAS), 373-393 (VSIL…LVFA), 465-485 (PFVV…CLQI), 660-680 (PVLI…FLVI), 686-706 (FWLI…MTLW), and 718-738 (LIYT…TFVL). The 160-residue stretch at 233 to 392 (ARSKVLVSLV…FSFFGSCLVF (160 aa)) folds into the SSD domain. The N-linked (GlcNAc...) asparagine glycan is linked to asparagine 762. 2 helical membrane-spanning segments follow: residues 765-785 (SFLI…FTLF) and 787-807 (CLLL…PVFL).

It belongs to the patched family.

It localises to the membrane. Its function is as follows. Could act as a repressor of canonical hedgehog signaling by antagonizing the effects of SMO, as suggested by down-regulation of hedgehog target genes, including GLI1, PTCH1, and PTCH2 in PTCHD4-expressing cells. The protein is Patched domain-containing protein 4 (PTCHD4) of Homo sapiens (Human).